A 252-amino-acid chain; its full sequence is 5-oxoprolinase subunit A (252 aa).

The protein belongs to the LamB/PxpA family. Forms a complex composed of PxpA, PxpB and PxpC.

It catalyses the reaction 5-oxo-L-proline + ATP + 2 H2O = L-glutamate + ADP + phosphate + H(+). Catalyzes the cleavage of 5-oxoproline to form L-glutamate coupled to the hydrolysis of ATP to ADP and inorganic phosphate. This chain is 5-oxoprolinase subunit A, found in Staphylococcus saprophyticus subsp. saprophyticus (strain ATCC 15305 / DSM 20229 / NCIMB 8711 / NCTC 7292 / S-41).